A 338-amino-acid polypeptide reads, in one-letter code: Plasminogen (338 aa).

The Kringle 5 domain maps to 9-88; it reads CMLGIGKGYQ…LFDYCDVPQC (80 aa). Intrachain disulfides connect C9/C88, C30/C71, C59/C83, C95/C213, C105/C113, C135/C151, C227/C294, C257/C273, and C284/C312. One can recognise a Peptidase S1 domain in the interval 109 to 336; the sequence is IVGGCVAIAH…FINWIERIMQ (228 aa). The residue at position 125 (S125) is a Phosphoserine. Active-site charge relay system residues include H150 and D193. The active-site Charge relay system is the S288.

Belongs to the peptidase S1 family. Plasminogen subfamily. Interacts with CSPG4 and AMOT. Interacts (via the Kringle domains) with HRG; the interaction tethers PLG to the cell surface and enhances its activation. Interacts (via Kringle 4 domain) with ADA; the interaction stimulates PLG activation when in complex with DPP4. Angiostatin: Interacts with ATP5F1A; the interaction inhibits most of the angiogenic effects of angiostatin.

It localises to the secreted. The enzyme catalyses Preferential cleavage: Lys-|-Xaa &gt; Arg-|-Xaa, higher selectivity than trypsin. Converts fibrin into soluble products.. With respect to regulation, converted into plasmin by plasminogen activators, both plasminogen and its activator being bound to fibrin. Activated with catalytic amounts of streptokinase. In terms of biological role, plasmin dissolves the fibrin of blood clots and acts as a proteolytic factor in a variety of other processes including embryonic development, tissue remodeling, tumor invasion, and inflammation. In ovulation, weakens the walls of the Graafian follicle. It activates the urokinase-type plasminogen activator, collagenases and several complement zymogens, such as C1, C4 and C5. Cleavage of fibronectin and laminin leads to cell detachment and apoptosis. Also cleaves fibrin, thrombospondin and von Willebrand factor. Its role in tissue remodeling and tumor invasion may be modulated by CSPG4. Binds to cells. This chain is Plasminogen (PLG), found in Equus caballus (Horse).